A 214-amino-acid chain; its full sequence is MSLKEQLGEELYGQVLAKLGEGAKLVDISDGSFIPKEKFDAVNSEKKSLEQQLTDRDQQLQELSTKATGHDELSAKIADLQKANEEAKQAFEAEKQQLKYEHALETALRDSGAKNPKAVKALLDTESIKLDGDKLLGFEDQIKALKEQEDYLFKGTEPNGGVQGTPPPGKGADLGGLPTKKNPFKQGPDFNLTEQGILFRENPELAKKLQAEAQ.

Positions 36-105 form a coiled coil; sequence KEKFDAVNSE…QQLKYEHALE (70 aa). The disordered stretch occupies residues 154 to 190; sequence KGTEPNGGVQGTPPPGKGADLGGLPTKKNPFKQGPDF.

This sequence belongs to the SPP1-like scaffolding protein family. Homodimer. Interacts with the capsid protein gp13.

Functionally, scaffolding protein involved in the icosahedric procapsid assembly. Coassembles with the capsid proteins to form the procapsid, in which the scaffolding protein is found within the external shell of icosahedrally arranged capsid protein subunits. In a subsequent step the scaffolding protein molecules are released from the procapsid. The sequence is that of Capsid assembly scaffolding protein from Bacillus phage SPP1 (Bacteriophage SPP1).